A 64-amino-acid chain; its full sequence is Large ribosomal subunit protein bL35 (64 aa).

It belongs to the bacterial ribosomal protein bL35 family.

This Shewanella frigidimarina (strain NCIMB 400) protein is Large ribosomal subunit protein bL35.